Here is a 1598-residue protein sequence, read N- to C-terminus: MEAERETELSQLLLTELLSYQFANPVKWIETQDVLLKEKEINHMIEIGPSSTLTNMAKRTISKKYSEHDAALREPRLLQSFDEHAAEIYCETMQIRTQPHKSSAPQEPVPKAAPKAAPPVPVATAPLPEPGRQVSTMPINVEDVPIQSRDVIVATVAQKLRKHFLDIDCSKSIAQLCGGRSTMENELVGDLSLIFDPLPDRAEEMGISELSQIVSGSTSTTKLLTAHGKLTASIFTHKMPGGFTITDARKHLEVQWRLGVGRQNAILLRMATEVLPSRLKTREEATMLLDKIAEAYADEQGLKLQPMTEVPMSAPTTSSETKVISGCSDVELYTSNDISLPESEALVNAQKMLNIVKTENDTLQEKMDLLTTELGDDFIQGILPAWSPAKIRKYESCWNWALQDLLLLLNSILRGETSLDNSVTRSTCDMIVRRSNDRLIDVMRYMLSSNKLAGDELLVSMAKSVLAMLIEDSQNWLSCAQTSRFFGHELHNPIDAYAQGTPGSDSVEVKVKTRSQGTWKYDTSLIDLYKSSLACVREDGLRLKGKTVLLTGAGPSSIGRELLQHLLVSGALVLVATSRFSPTACRELQNLYMKWGSSGSQLVVCPFNQGSRGDCESLVQYIFSAKAKGGLGWDLDFVIPFAAVSEEGQIDELDSKSEKAHRIMLTNVLRLLGSIKQHKQAGPRNTSPVKVLLPLSPNHGVFGRDGLYAESKAGLEMLLNKWYSEDWTSYLAICGVTIGWVRGTGLMAVNDAVAAEVEVRTGVKTFSQFEMAQRLAALLVNPFAHEVEIQPVKVDISGGMADTTDLRSILSDIRREIKQDSTSTPTHQHLPSHHHVDEPEIGKPLSSVSPMANLKLNFPQLPDYEDDISPLNTLSGMVDLDRTVVITGISEVGPWGNSRTRWEMEAFGEFSLEGCIEMAWIMGLITHYNGKLGDDMGGEQYTGWVDAKTKAPVADVDVKARYEEQIIEHSGIRLVEPELDNGYDPRKKQLLHEIVLTRDLAPFAAPPELAKQFMQEHGEKVDAIPGSTENEDWTVRLRKGAVILVPKALRFDRSAAGQIPQGWDARRYGVPDWAVDQIGRETLFALVATAESLLSSGIVDPYELYQYMHVSEVGNCVGSGLGGQQALKKAFRYRYHDKPVQSDVLQEVFSNTAAAWINMLLLSSSGPIRTPVGACATAVESLELGYELITAGKAKIALVGGHDDMTEEVAYEFAKMRATVNTDEEEARGRMYSEMSRPMTTTRDGFVESQGSGIQVLASATMAIKMGLPIYGIVSWAGTASDKTGRSVPSPGKGTLTNARETHGADKNLLLDIHFRKDRITRHQQQIQADLEQDLKSLEQRFAMSRSITKSEVDKMSLFLHKEAIERNKQVLKSLGHTFWTSHTDISPIRGALSAWGLSIDDLDFVSLHGTSTVLNDKNETSVIQSQLSHLGRTRGNPAYCITQKYLTGHSKGAAGAWMINGALQALNTGLIPGNRNADDVAPELEGNDFLFFPHHSVQTNGLRAFSITSFGFGQKGAQAIIVHPRYLYAALSDAEEFHQYRRRLNVRQRRATKFFQRGLATETLFIAKEEPPYTEKQESRVLLNPEARMEGQHYKDV.

A disordered region spans residues 96-134 (RTQPHKSSAPQEPVPKAAPKAAPPVPVATAPLPEPGRQV). Over residues 104-115 (APQEPVPKAAPK) the composition is skewed to low complexity. The Carrier domain occupies 143–221 (DVPIQSRDVI…QIVSGSTSTT (79 aa)). Position 181 is an O-(pantetheine 4'-phosphoryl)serine (Ser181). The tract at residues 543-784 (LKGKTVLLTG…LAALLVNPFA (242 aa)) is ketoreductase (KR) domain. The tract at residues 818–844 (KQDSTSTPTHQHLPSHHHVDEPEIGKP) is disordered. A compositionally biased stretch (polar residues) spans 820 to 829 (DSTSTPTHQH). The Ketosynthase family 3 (KS3) domain occupies 992-1524 (HEIVLTRDLA…QKGAQAIIVH (533 aa)). The active-site For beta-ketoacyl synthase activity is Cys1175. The tract at residues 1280-1301 (ASDKTGRSVPSPGKGTLTNARE) is disordered. Active-site for beta-ketoacyl synthase activity residues include His1409 and His1450.

Belongs to the thiolase-like superfamily. Fungal fatty acid synthetase subunit alpha family. Fatty acid synthase is composed of alpha and beta subunits.

It catalyses the reaction acetyl-CoA + n malonyl-CoA + 2n NADPH + 4n H(+) = a long-chain-acyl-CoA + n CoA + n CO2 + 2n NADP(+).. It carries out the reaction a fatty acyl-[ACP] + malonyl-[ACP] + H(+) = a 3-oxoacyl-[ACP] + holo-[ACP] + CO2. The enzyme catalyses a (3R)-hydroxyacyl-[ACP] + NADP(+) = a 3-oxoacyl-[ACP] + NADPH + H(+). It functions in the pathway mycotoxin biosynthesis. In terms of biological role, fatty acid synthase subunit alpha; part of the gene cluster that mediates the biosynthesis of gramillins A and B, bicyclic lipopeptides that induce cell death in maize leaves but not in wheat leaves. The nonribosomal peptide synthetase GRA1 incorporates respectively a glutamic adic (Glu), a leucine (Leu), a serine (Ser), a hydroxyglutamine (HOGln), a 2-amino decanoic acid, and 2 cysteins (CysB and CysA). The biosynthesis of 2-amino decanoic acid incorporated in gramillins could be initiated by a fatty acid synthase composed of the alpha and beta subunits FGSG_00036 and FGSG_11656. The cytochrome P450 monooxygenase FGSG_15680 could hydroxylate the fatty acid chain. Subsequent oxidation to the ketone by the oxidoreductase FGSG_00048 and transamination by aminotransferase FGSG_00049 could form 2-amino-decanoic acid. On the other hand, FGSG_15680 could also be responsible for the HO-modified glutamine at the gamma-position. Whether hydroxylation occurs on the fully assembled product or on the Gln residue prior to assembly into the gramillins requires further proof. The thioredoxin FGSG_00043 could also be required for the disulfide-bond formation between CysA and CysB. The specific involvement of the remaining proteins from the cluster is more difficult to discern, but could have broader regulatory (FGSG_00040 and FGSG_11657) or enzymatic functions (FGSG_00044 and FGSG_00045). The final C-domain of GRA1 does not possess the expected sequence of a termination CT domain, often implicated in macrocyclization and release of a cyclopeptidein fungal NRPs; and the thioesterase FGSG_00047 may act in concert with the terminal C-domain of GRA1 to catalyze the formation of the macrocyclic anhydride and release of the products. This Gibberella zeae (strain ATCC MYA-4620 / CBS 123657 / FGSC 9075 / NRRL 31084 / PH-1) (Wheat head blight fungus) protein is Fatty acid synthase subunit alpha.